Consider the following 1237-residue polypeptide: Anion exchange protein 2 (1237 aa).

The tract at residues 1–237 is disordered; it reads MSSAPRRPAS…SYNLQERRRI (237 aa). Residues 1 to 703 lie on the Cytoplasmic side of the membrane; that stretch reads MSSAPRRPAS…SDFRDALDPQ (703 aa). 2 stretches are compositionally biased toward basic and acidic residues: residues 37–49 and 58–75; these read ELHR…RFEE and GGEE…EYHR. Basic residues-rich tracts occupy residues 76–85 and 94–110; these read QSSHHIHHPL and RRRK…RRRP. S113 carries the phosphoserine modification. Positions 122-133 are enriched in acidic residues; the sequence is EEGEEDEEEANE. Residues 137-151 are compositionally biased toward low complexity; it reads ARAPTEPSPASTPSS. Phosphoserine is present on residues S144, S170, and S172. The segment covering 206-215 has biased composition (gly residues); sequence TAGGDNGGAS. Residue S239 is modified to Phosphoserine. Phosphothreonine is present on T253. N6-methyllysine is present on K270. The interval 281–316 is disordered; it reads RRHLVRKNAKGSAQSSREGREPGPTPRSRPRAPHKP. The residue at position 439 (S439) is a Phosphoserine. The disordered stretch occupies residues 445-464; sequence SLLGHHHGQGAESDPHVTEP. Helical transmembrane passes span 704–727, 733–770, 790–812, and 822–843; these read CVAA…GLLG, LIGV…LLVF, VWIG…SFLV, and IFAF…IKIF. Residues 704-1237 form a membrane (anion exchange) region; it reads CVAAVIFIYF…DEYNEMPMPV (534 aa). The Extracellular segment spans residues 844-896; it reads QEHPLHGCSVSNSSETDSSENATWAGAGSTLGPANRSSAGQAGQGRPRGQPNT. N855, N864, and N878 each carry an N-linked (GlcNAc...) asparagine glycan. The helical transmembrane segment at 897–914 threads the bilayer; that stretch reads ALLSLVLMAGTFFIAFFL. The Cytoplasmic portion of the chain corresponds to 915–929; sequence RKFKNSRFFPGRIRR. 5 helical membrane passes run 930 to 950, 984 to 1006, 1032 to 1053, 1087 to 1132, and 1159 to 1195; these read VIGD…DYSI, PFPV…LIFM, LLLI…LAAA, VTGL…IQFY, and MHLF…TVPL. C1169 carries the S-palmitoyl cysteine lipid modification.

The protein belongs to the anion exchanger (TC 2.A.31) family. Expressed in the ileum (at protein level).

It localises to the cell membrane. It is found in the apical cell membrane. The protein localises to the basolateral cell membrane. The enzyme catalyses hydrogencarbonate(in) + chloride(out) = hydrogencarbonate(out) + chloride(in). In terms of biological role, sodium-independent anion exchanger which mediates the electroneutral exchange of chloride for bicarbonate ions across the cell membrane. Plays an important role in osteoclast differentiation and function. Regulates bone resorption and calpain-dependent actin cytoskeleton organization in osteoclasts via anion exchange-dependent control of pH. Essential for intracellular pH regulation in CD8(+) T-cells upon CD3 stimulation, modulating CD8(+) T-cell response. The chain is Anion exchange protein 2 (SLC4A2) from Oryctolagus cuniculus (Rabbit).